Reading from the N-terminus, the 353-residue chain is Major outer membrane protein (353 aa).

The first 20 residues, 1-20 (MKKTIVALAVAAVAATSANA), serve as a signal peptide directing secretion.

As to quaternary structure, disulfide bond interactions within and between MOMP molecules and other components form high molecular-weight oligomers.

It localises to the cell outer membrane. Functionally, structural rigidity of the outer membrane of elementary bodies and porin forming, permitting diffusion of solutes through the intracellular reticulate body membrane. The protein is Major outer membrane protein (ompH) of Pasteurella multocida.